A 273-amino-acid chain; its full sequence is Ribosomal RNA small subunit methyltransferase A (273 aa).

Residues asparagine 18, leucine 20, glycine 45, glutamate 66, aspartate 91, and asparagine 113 each contribute to the S-adenosyl-L-methionine site.

This sequence belongs to the class I-like SAM-binding methyltransferase superfamily. rRNA adenine N(6)-methyltransferase family. RsmA subfamily.

The protein localises to the cytoplasm. It catalyses the reaction adenosine(1518)/adenosine(1519) in 16S rRNA + 4 S-adenosyl-L-methionine = N(6)-dimethyladenosine(1518)/N(6)-dimethyladenosine(1519) in 16S rRNA + 4 S-adenosyl-L-homocysteine + 4 H(+). Specifically dimethylates two adjacent adenosines (A1518 and A1519) in the loop of a conserved hairpin near the 3'-end of 16S rRNA in the 30S particle. May play a critical role in biogenesis of 30S subunits. This chain is Ribosomal RNA small subunit methyltransferase A, found in Escherichia coli O81 (strain ED1a).